We begin with the raw amino-acid sequence, 93 residues long: Small ribosomal subunit protein uS19 (93 aa).

The protein belongs to the universal ribosomal protein uS19 family.

Functionally, protein S19 forms a complex with S13 that binds strongly to the 16S ribosomal RNA. The chain is Small ribosomal subunit protein uS19 from Salinispora tropica (strain ATCC BAA-916 / DSM 44818 / JCM 13857 / NBRC 105044 / CNB-440).